We begin with the raw amino-acid sequence, 554 residues long: MNFIEAALLIQGSACVYSKKVEYLYSLVYQALDFISGKRRAKQLSLVQEDGSNRAVNSGTPCETEDEFLSLDDFPDSRANVDLKNDQASSELLIIPLLPMALVAPDEVEKSSNPLYSCQGEVLASRKDFRMNTCTPDPRGSFMLDPVGMCPVEPVDVHPMPRSQKDAEEAEEQPMAVSRNGSPVSVRSISQEPDGPALSSGDEDAEDVAELPEVALEPAEPRTSQQTAILPRRYMLRERQGAPEPASQPQETPDPWQSLDPFDSLDSKLFQKGKPYSVPPGVEEAPGQKRKRKGATKLQDFHQWYLDAYAEHPDGRRARRKGPSFADMEVLYWKHVKEQLETLQKLRRRKMTERWLPGAKQDLWPAEEERLEEPLEDLGVADDFLEAEEYVEESEGVMPREAAGLDAEAIPESLKYEELVRRNVELFIATSQKFIQETELSQRIRDWEDTIQPLLQEQEQHVPFDIHTYGDQLVSRFPQLNEWCPFAELVAGQPAFEVCRSMLASLQLANDYTVEITQQPGLEAAVDTMSLRLLTHQRAHMRFQTYAAPSMAQP.

Serine 45, serine 178, serine 182, serine 199, and serine 200 each carry phosphoserine. The segment at 154–296 (PVDVHPMPRS…GQKRKRKGAT (143 aa)) is disordered. Residues 179-191 (RNGSPVSVRSISQ) show a composition bias toward polar residues. The segment covering 201-210 (GDEDAEDVAE) has biased composition (acidic residues). Residue serine 441 is modified to Phosphoserine.

This sequence belongs to the CND2 H2 (condensin-2 subunit 2) family. In terms of assembly, component of the condensin-2 complex, which contains the SMC2 and SMC4 heterodimer, and three non SMC subunits, NCAPG2, NCAPH2 and NCAPD3 that probably regulate the complex.

It is found in the nucleus. In terms of biological role, regulatory subunit of the condensin-2 complex, a complex that seems to provide chromosomes with an additional level of organization and rigidity and in establishing mitotic chromosome architecture. May promote the resolution of double-strand DNA catenanes (intertwines) between sister chromatids. Condensin-mediated compaction likely increases tension in catenated sister chromatids, providing directionality for type II topoisomerase-mediated strand exchanges toward chromatid decatenation. Required for decatenation of chromatin bridges at anaphase. Early in neurogenesis, may play an essential role to ensure accurate mitotic chromosome condensation in neuron stem cells, ultimately affecting neuron pool and cortex size. Seems to have lineage-specific role in T-cell development. In Rattus norvegicus (Rat), this protein is Condensin-2 complex subunit H2 (Ncaph2).